The chain runs to 155 residues: Small ribosomal subunit protein uS7 (155 aa).

Belongs to the universal ribosomal protein uS7 family. Part of the 30S ribosomal subunit. Contacts proteins S9 and S11.

Functionally, one of the primary rRNA binding proteins, it binds directly to 16S rRNA where it nucleates assembly of the head domain of the 30S subunit. Is located at the subunit interface close to the decoding center, probably blocks exit of the E-site tRNA. In Corynebacterium aurimucosum (strain ATCC 700975 / DSM 44827 / CIP 107346 / CN-1) (Corynebacterium nigricans), this protein is Small ribosomal subunit protein uS7.